The sequence spans 294 residues: Ribosomal RNA small subunit methyltransferase H (294 aa).

Residues 37–39 (GGH), Asp58, Leu93, Asp105, and Gln112 each bind S-adenosyl-L-methionine.

This sequence belongs to the methyltransferase superfamily. RsmH family.

The protein localises to the cytoplasm. The catalysed reaction is cytidine(1402) in 16S rRNA + S-adenosyl-L-methionine = N(4)-methylcytidine(1402) in 16S rRNA + S-adenosyl-L-homocysteine + H(+). In terms of biological role, specifically methylates the N4 position of cytidine in position 1402 (C1402) of 16S rRNA. This Fervidobacterium nodosum (strain ATCC 35602 / DSM 5306 / Rt17-B1) protein is Ribosomal RNA small subunit methyltransferase H.